Reading from the N-terminus, the 382-residue chain is MYRVLIVFFLFVFLYIVYQPFYQAYLHIGHAQQDYNDTLDDRMDYIESVMRRRHYVPIEALPAIRFDTNLGTLAGDTIKCMSVPLFVSDIDLPMFDCSQICDNPSAAYFFVNETDVFVVNGHRLTVGGYCSTNSLPRNCNRETSVILMSLNQWTCIAEDPRYYAGTDNMTQLAGRQHFDRIMPGQSDRNVLFDRLLGREVNVTTNTFRRSWDELLEDGTRRFEMRCNARDNNNNLMFVNPLNPLECLPNVCTNVSNVHTSVRPVFETGECDCGDEAVTRVTHIVPGDRTSMCASIIDGLDKSTASYRYRVECVNLYTSILNYSNNKLLCPSDTFDSNTDAAFAFEVPGSYPLSRNGINEPTYRFYLDTRSRVNYNDVRGQLS.

As to quaternary structure, forms the PIF complex together with PIF1 and PIF3. The complex also interacts with per os infectivity factor PIF0.

In terms of biological role, per os infectivity factor that mediates the specific binding of occluded virions (ODV) to the host midgut target cells. This Autographa californica nuclear polyhedrosis virus (AcMNPV) protein is Per os infectivity factor 2.